The primary structure comprises 492 residues: FAD-linked oxidoreductase pgmH (492 aa).

Residues 54–224 (SIRLATLVVY…TEFKYRVHKQ (171 aa)) form the FAD-binding PCMH-type domain.

It belongs to the oxygen-dependent FAD-linked oxidoreductase family. The cofactor is FAD.

It participates in pigment biosynthesis. Its pathway is secondary metabolite biosynthesis. Its function is as follows. FAD-linked oxidoreductase; part of the gene cluster that mediates the biosynthesis of pleosporalin A, ascomycone A, as well as a third cryptic naphthoquinone derived pigment, all responsible for the coloration of conidia. Essential for the production of pleosporalin A, but not the 2 other final products. The pathway begins with the biosynthesis of the cyclized heptaketide 3-acetonyl-1,6,8-trihydroxy-2-naphthaldehyde by the NR-PKS pgmA. The C-6 hydroxyl group is further methylated by the O-methyltransferase pgmB to yield fusarubinaldehyde which is in turn oxidized by the cytochrome P450 monooxygenase pgmC at C-9. The C-1 hydroxyl group is then methylated spontaneously. Although pgmE, pgmD and pgmH are essential for the production of pleosporalin A, it is not the case for the 2 other final products and it remains difficult to assign a specific function to each enzyme. PgmF and pgmG seem not to be involved in pigment biosynthesis although they were regulated by the cluster-specific transcription factor pgmR. The sequence is that of FAD-linked oxidoreductase pgmH from Aspergillus terreus.